Here is a 325-residue protein sequence, read N- to C-terminus: Elongation factor P--(R)-beta-lysine ligase (325 aa).

76–78 serves as a coordination point for substrate; sequence SPE. Residues 100–102 and Asn-109 each bind ATP; that span reads RNE. Tyr-118 lines the substrate pocket. An ATP-binding site is contributed by 244–245; the sequence is EL. Glu-251 lines the substrate pocket. Gly-300 provides a ligand contact to ATP.

The protein belongs to the class-II aminoacyl-tRNA synthetase family. EpmA subfamily. In terms of assembly, homodimer.

The enzyme catalyses D-beta-lysine + L-lysyl-[protein] + ATP = N(6)-((3R)-3,6-diaminohexanoyl)-L-lysyl-[protein] + AMP + diphosphate + H(+). Functionally, with EpmB is involved in the beta-lysylation step of the post-translational modification of translation elongation factor P (EF-P) on 'Lys-34'. Catalyzes the ATP-dependent activation of (R)-beta-lysine produced by EpmB, forming a lysyl-adenylate, from which the beta-lysyl moiety is then transferred to the epsilon-amino group of EF-P 'Lys-34'. This is Elongation factor P--(R)-beta-lysine ligase from Escherichia fergusonii (strain ATCC 35469 / DSM 13698 / CCUG 18766 / IAM 14443 / JCM 21226 / LMG 7866 / NBRC 102419 / NCTC 12128 / CDC 0568-73).